Here is a 346-residue protein sequence, read N- to C-terminus: Uroporphyrinogen decarboxylase (346 aa).

Substrate-binding positions include 21-25, Asp71, Tyr146, Ser201, and His316; that span reads RQAGR.

It belongs to the uroporphyrinogen decarboxylase family. In terms of assembly, homodimer.

It is found in the cytoplasm. The enzyme catalyses uroporphyrinogen III + 4 H(+) = coproporphyrinogen III + 4 CO2. Its pathway is porphyrin-containing compound metabolism; protoporphyrin-IX biosynthesis; coproporphyrinogen-III from 5-aminolevulinate: step 4/4. Its function is as follows. Catalyzes the decarboxylation of four acetate groups of uroporphyrinogen-III to yield coproporphyrinogen-III. The protein is Uroporphyrinogen decarboxylase of Rickettsia massiliae (strain Mtu5).